A 237-amino-acid polypeptide reads, in one-letter code: Urease subunit alpha (237 aa).

The interval 1–102 (MKLTPKELDK…LVTIHTPVED (102 aa)) is urease gamma. The urease beta stretch occupies residues 103–237 (NGKLAPGEVF…CGCEATKDKQ (135 aa)).

This sequence in the N-terminal section; belongs to the urease gamma subunit family. It in the C-terminal section; belongs to the urease beta subunit family. In terms of assembly, heterohexamer of 3 UreA (alpha) and 3 UreB (beta) subunits.

The protein localises to the cytoplasm. It catalyses the reaction urea + 2 H2O + H(+) = hydrogencarbonate + 2 NH4(+). Its pathway is nitrogen metabolism; urea degradation; CO(2) and NH(3) from urea (urease route): step 1/1. This chain is Urease subunit alpha, found in Helicobacter felis.